The primary structure comprises 664 residues: Phosphomethylpyrimidine synthase (664 aa).

Substrate-binding positions include N235, M264, Y293, H329, 349–351 (SRG), 390–393 (DGMR), and E429. H433 is a binding site for Zn(2+). Y456 serves as a coordination point for substrate. A Zn(2+)-binding site is contributed by H497. Positions 577, 580, and 585 each coordinate [4Fe-4S] cluster.

Belongs to the ThiC family. Homodimer. The cofactor is [4Fe-4S] cluster.

It carries out the reaction 5-amino-1-(5-phospho-beta-D-ribosyl)imidazole + S-adenosyl-L-methionine = 4-amino-2-methyl-5-(phosphooxymethyl)pyrimidine + CO + 5'-deoxyadenosine + formate + L-methionine + 3 H(+). It functions in the pathway cofactor biosynthesis; thiamine diphosphate biosynthesis. Its function is as follows. Catalyzes the synthesis of the hydroxymethylpyrimidine phosphate (HMP-P) moiety of thiamine from aminoimidazole ribotide (AIR) in a radical S-adenosyl-L-methionine (SAM)-dependent reaction. This Shewanella amazonensis (strain ATCC BAA-1098 / SB2B) protein is Phosphomethylpyrimidine synthase.